A 560-amino-acid polypeptide reads, in one-letter code: MYDNMSTMVYIKEDKLEKLTQDEIISKTKQVIQGLEALKNEHNSILQSLLETLKCLKKDDESNLVEEKSNMIRKSLEMLELGLSEAQVMMALSNHLNAVESEKQKLRAQVRRLCQENQWLRDELANTQQKLQKSEQSVAQLEEEKKHLEFMNQLKKYDDDISPSEDKDTDSTKEPLDDLFPNDEDDPGQGIQQQHSSAAAAAQQGDYEIPARLRTLHNLVIQYASQGRYEVAVPLCKQALEDLEKTSGHDHPDVATMLNILALVYRDQNKYKDAANLLNDALAIREKTLGKDHPAVAATLNNLAVLYGKRGKYKEAEPLCKRALEIREKVLGKDHPDVAKQLNNLALLCQNQGKYEEVEYYYQRALEIYQTKLGPDDPNVAKTKNNLASCYLKQGKFKQAETLYKEILTRAHEREFGSVDDENKPIWMHAEEREECKGKQKDGTSFGEYGGWYKACKVDSPTVTTTLKNLGALYRRQGKFEAAETLEEAAMRSRKQGLDNVHKQRVAEVLNDPENMEKRRSRESLNVDVVKYESGPDGGEEVSMSVEWNGMRKMKLGLVK.

Positions 31–99 form a coiled coil; that stretch reads VIQGLEALKN…MALSNHLNAV (69 aa). Over residues 155–176 the composition is skewed to basic and acidic residues; it reads KKYDDDISPSEDKDTDSTKEPL. Residues 155–203 form a disordered region; that stretch reads KKYDDDISPSEDKDTDSTKEPLDDLFPNDEDDPGQGIQQQHSSAAAAAQ. Position 162 is a phosphoserine (serine 162). Positions 192-203 are enriched in low complexity; the sequence is QQQHSSAAAAAQ. TPR repeat units follow at residues 213 to 246, 255 to 288, 297 to 330, 339 to 372, and 381 to 414; these read LRTL…LEKT, ATML…REKT, AATL…REKV, AKQL…YQTK, and AKTK…AHER. Phosphotyrosine is present on tyrosine 449. Position 460 is a phosphoserine (serine 460). A TPR 6 repeat occupies 464 to 497; that stretch reads TTTLKNLGALYRRQGKFEAAETLEEAAMRSRKQG. A phosphoserine; by AMPK mark is found at serine 521 and serine 524.

The protein belongs to the kinesin light chain family. Oligomeric complex composed of two heavy chains and two light chains. Interacts with SPAG9. Interacts with ATCAY; may link mitochondria to KLC1 and regulate mitochondria localization into neuron projections. Interacts (via TPR repeats) with TOR1A; the interaction associates TOR1A with the kinesin oligomeric complex. Interacts with BORCS5. Interacts with MAPK8IP3/JIP3 and NTRK2/TRKB; interaction with NTRK2/TRKB is mediated by MAPK8IP3/JIP3. Interacts with CLSTN1; phosphorylation at Ser-460 inhibits interaction with CLSTN1. Phosphorylation at Ser-460 by ERK inhibits interaction with CLSTN1 and localization to cytoplasmic vesicles.

It localises to the cell projection. It is found in the growth cone. Its subcellular location is the cytoplasmic vesicle. The protein resides in the cytoplasm. The protein localises to the cytoskeleton. Its function is as follows. Kinesin is a microtubule-associated force-producing protein that may play a role in organelle transport. The light chain may function in coupling of cargo to the heavy chain or in the modulation of its ATPase activity. The chain is Kinesin light chain 1 (KLC1) from Pongo abelii (Sumatran orangutan).